The primary structure comprises 306 residues: MELKDYYAIMGVKPTDDLKTIKTAYRRLARKYHPDVSKEPDAEARFKEVAEAWEVLSDEQRRAEYDQMWQHRNDPQFNRQFHHGDGQSFNAEDFDDIFSSIFGQHARQSRQRPAARGHDIEIEVAVFLEETLTEHKRTISYNLPVYNAFGMIEQEIPKTLNVKIPAGVGNGQRIRLKGQGTPGENGGPNGDLWLVIHIAPHPLFDIVGQDLEIVVPVSPWEAALGAKVTVPTLKESILLTIPPGSQAGQRLRVKGKGLVSKKQTGDLYAVLKIVMPPKPDENTAALWQQLADAQSSFDPRKDWGKA.

The region spanning 5–69 is the J domain; sequence DYYAIMGVKP…QRRAEYDQMW (65 aa).

It is found in the cytoplasm. Its subcellular location is the nucleoid. Functionally, DNA-binding protein that preferentially recognizes a curved DNA sequence. It is probably a functional analog of DnaJ; displays overlapping activities with DnaJ, but functions under different conditions, probably acting as a molecular chaperone in an adaptive response to environmental stresses other than heat shock. Lacks autonomous chaperone activity; binds native substrates and targets them for recognition by DnaK. Its activity is inhibited by the binding of CbpM. This chain is Curved DNA-binding protein, found in Escherichia coli O8 (strain IAI1).